Reading from the N-terminus, the 99-residue chain is Nucleoid-associated protein LCABL_24440 (99 aa).

It belongs to the YbaB/EbfC family. As to quaternary structure, homodimer.

It is found in the cytoplasm. It localises to the nucleoid. Binds to DNA and alters its conformation. May be involved in regulation of gene expression, nucleoid organization and DNA protection. In Lacticaseibacillus casei (strain BL23) (Lactobacillus casei), this protein is Nucleoid-associated protein LCABL_24440.